A 467-amino-acid chain; its full sequence is MSAPPAPPPDRSAPPDRTDSAQTEPTRPLVRRARRARMWLEPGLGVKRWIFLFVVCTFVGAVAFLHFTWTGPLHPLATKWILWLNQFAEPGVFPLYAVGMVVMALALAGALYSITMISRAMLRGTGTAPETAVNVLYERKTLSRGMRVVTVGGGTGLSNLLTGLKTHSSNITAVVTVADDGGSSGRLREALDMVAPGDLTDCYAALSESPALARLLLHRFGRGEGLEGHTFGNLLLATLSEERGGLGTAMQDIHEILKVRGRVYPATTRPVTLVAELADGRTIRGESRFAEQIRPSRIERVRLEPENPSALTQVLEAVRDAEMIVLGPGSLFTSIIPALLIPDIARAVRESPAPVVYVASLMTEPGETDGLSLSDHVNAITRHLGRTPDWVLLSNSKIEPAVQRRYQQEGATVLTLDGAGRDLRGRVRFAPLIQAGTARHDPQKLAAALMQLWDGPPRRFSLPGQRD.

The segment covering 1 to 12 (MSAPPAPPPDRS) has biased composition (pro residues). A disordered region spans residues 1 to 27 (MSAPPAPPPDRSAPPDRTDSAQTEPTR).

This sequence belongs to the gluconeogenesis factor family.

Its subcellular location is the cytoplasm. Its function is as follows. Required for morphogenesis under gluconeogenic growth conditions. The chain is Putative gluconeogenesis factor from Deinococcus radiodurans (strain ATCC 13939 / DSM 20539 / JCM 16871 / CCUG 27074 / LMG 4051 / NBRC 15346 / NCIMB 9279 / VKM B-1422 / R1).